A 460-amino-acid chain; its full sequence is Equilibrative nucleoside transporter 1 (460 aa).

The Cytoplasmic segment spans residues Met1–Lys12. Residues Ala13–Trp29 form a helical membrane-spanning segment. Over Asn30–Asn82 the chain is Extracellular. Asn48 carries N-linked (GlcNAc...) asparagine glycosylation. The chain crosses the membrane as a helical span at residues Val83–Ser107. Topologically, residues Gln108–Arg111 are cytoplasmic. A helical transmembrane segment spans residues Ile112–Val130. Residues Lys131–Ile138 are Extracellular-facing. The helical transmembrane segment at Phe139–Leu157 threads the bilayer. Residues Gln158–Ala174 lie on the Cytoplasmic side of the membrane. Residues Pro175–Ser199 form a helical membrane-spanning segment. Topologically, residues Glu200–Phe206 are extracellular. Residues Gly207–Pro227 traverse the membrane as a helical segment. At Arg228–Val291 the chain is on the cytoplasmic side. Position 254 is a phosphoserine (Ser254). Over residues Lys255–Ser266 the composition is skewed to basic and acidic residues. The interval Lys255 to Asn277 is disordered. Ser273 bears the Phosphoserine mark. A helical transmembrane segment spans residues Pro292–Thr311. At Ala312–Pro323 the chain is on the extracellular side. A helical transmembrane segment spans residues Trp324–Trp342. Residues Leu343–Arg359 are Cytoplasmic-facing. The chain crosses the membrane as a helical span at residues Trp360–Cys378. Residues Asn379–Asp397 lie on the Extracellular side of the membrane. The chain crosses the membrane as a helical span at residues Ala398–Leu417. The Cytoplasmic segment spans residues Cys418–Gly435. The helical transmembrane segment at Asn436 to Leu456 threads the bilayer. Topologically, residues Arg457–Val460 are extracellular.

Belongs to the SLC29A/ENT transporter (TC 2.A.57) family. In terms of assembly, identified in a complex with STOM. Glycosylated. In terms of tissue distribution, highly expressed in heart, spleen, lung, liver and testis. Lower level of expression in brain and kidney. Expressed in adipose tissues, brown adipocytes expressing significantly higher amounts than white adipocytes. Expressed in seminiferous tubules.

Its subcellular location is the basolateral cell membrane. It localises to the apical cell membrane. It is found in the cell membrane. It carries out the reaction adenosine(in) = adenosine(out). The enzyme catalyses guanosine(in) = guanosine(out). The catalysed reaction is inosine(in) = inosine(out). It catalyses the reaction uridine(out) = uridine(in). It carries out the reaction thymidine(in) = thymidine(out). The enzyme catalyses cytidine(in) = cytidine(out). The catalysed reaction is adenine(out) = adenine(in). It catalyses the reaction guanine(out) = guanine(in). It carries out the reaction thymine(out) = thymine(in). The enzyme catalyses uracil(in) = uracil(out). The catalysed reaction is hypoxanthine(out) = hypoxanthine(in). Its activity is regulated as follows. Transporter activity is sensitive to low concentrations of the inhibitor nitrobenzylmercaptopurine riboside (NBMPR). Functionally, uniporter involved in the facilitative transport of nucleosides and nucleobases, and contributes to maintaining their cellular homeostasis. Functions as a Na(+)-independent transporter. Involved in the transport of nucleosides such as adenosine, guanosine, inosine, uridine, thymidine and cytidine. Also transports purine (hypoxanthine, adenine, guanine) and pyrimidine nucleobases (thymine, uracil). Mediates basolateral nucleoside uptake into Sertoli cells, thereby regulating the transport of nucleosides in testis across the blood-testis-barrier. Regulates inosine levels in brown adipocytes tissues (BAT) and extracellular inosine levels, which controls BAT-dependent energy expenditure. This is Equilibrative nucleoside transporter 1 from Mus musculus (Mouse).